The sequence spans 253 residues: Probable transcriptional regulatory protein KRH_13670 (253 aa).

This sequence belongs to the TACO1 family.

Its subcellular location is the cytoplasm. This Kocuria rhizophila (strain ATCC 9341 / DSM 348 / NBRC 103217 / DC2201) protein is Probable transcriptional regulatory protein KRH_13670.